The sequence spans 359 residues: MSTSKTIVFGLFVATLLVSCNVAANATTQPLFPAILIFGDSTVDTGNNNYHSQTIFKAKHLPYGVDLPGHEANGRYSNGKVISDVIASKLNIKELVPPFLQPNISHQDIVTGVSFASAGAGYDDRSSLSSKAIPVSQQPSMFKNYIARLKGIVGDKKAMEIINNALVVISAGPNDFILNFYDIPTRRLEYPTIHGYQEFILKRLDGFVRELYSLGCRNIVVGGLPPMGCLPIQMTAKMRNILRFCVEQENKDSVLYNQKLVKKLPEIQASLPGSNFLYANVYDPLMDMIQNPSKYGFKETKKGCCGTGYLETTFMCNPLTKTCPNHSDHLFWDSIHPSEAAYNYIGNFVDAQIRGWIKA.

The N-terminal stretch at 1–28 (MSTSKTIVFGLFVATLLVSCNVAANATT) is a signal peptide. Ser41 (nucleophile) is an active-site residue. Residues Asn103 and Asn325 are each glycosylated (N-linked (GlcNAc...) asparagine). Residues Asp333 and His336 contribute to the active site.

The protein belongs to the 'GDSL' lipolytic enzyme family.

Its subcellular location is the secreted. The chain is GDSL esterase/lipase At2g30310 from Arabidopsis thaliana (Mouse-ear cress).